The chain runs to 264 residues: Thymidylate synthase (264 aa).

Position 21 (R21) interacts with dUMP. H51 provides a ligand contact to (6R)-5,10-methylene-5,6,7,8-tetrahydrofolate. 126–127 (RR) contacts dUMP. The active-site Nucleophile is the C146. DUMP-binding positions include 166-169 (RSAD), N177, and 207-209 (HLY). D169 is a binding site for (6R)-5,10-methylene-5,6,7,8-tetrahydrofolate. Position 263 (A263) interacts with (6R)-5,10-methylene-5,6,7,8-tetrahydrofolate.

It belongs to the thymidylate synthase family. Bacterial-type ThyA subfamily. As to quaternary structure, homodimer.

It localises to the cytoplasm. It carries out the reaction dUMP + (6R)-5,10-methylene-5,6,7,8-tetrahydrofolate = 7,8-dihydrofolate + dTMP. The protein operates within pyrimidine metabolism; dTTP biosynthesis. Its function is as follows. Catalyzes the reductive methylation of 2'-deoxyuridine-5'-monophosphate (dUMP) to 2'-deoxythymidine-5'-monophosphate (dTMP) while utilizing 5,10-methylenetetrahydrofolate (mTHF) as the methyl donor and reductant in the reaction, yielding dihydrofolate (DHF) as a by-product. This enzymatic reaction provides an intracellular de novo source of dTMP, an essential precursor for DNA biosynthesis. This is Thymidylate synthase from Rhizobium johnstonii (strain DSM 114642 / LMG 32736 / 3841) (Rhizobium leguminosarum bv. viciae).